Here is a 121-residue protein sequence, read N- to C-terminus: Large ribosomal subunit protein bL12 (121 aa).

The protein belongs to the bacterial ribosomal protein bL12 family. Homodimer. Part of the ribosomal stalk of the 50S ribosomal subunit. Forms a multimeric L10(L12)X complex, where L10 forms an elongated spine to which 2 to 4 L12 dimers bind in a sequential fashion. Binds GTP-bound translation factors.

Forms part of the ribosomal stalk which helps the ribosome interact with GTP-bound translation factors. Is thus essential for accurate translation. The chain is Large ribosomal subunit protein bL12 from Pectobacterium carotovorum subsp. carotovorum (strain PC1).